A 180-amino-acid chain; its full sequence is Large ribosomal subunit protein uL5 (180 aa).

This sequence belongs to the universal ribosomal protein uL5 family. As to quaternary structure, part of the 50S ribosomal subunit; part of the 5S rRNA/L5/L18/L25 subcomplex. Contacts the 5S rRNA and the P site tRNA. Forms a bridge to the 30S subunit in the 70S ribosome.

In terms of biological role, this is one of the proteins that bind and probably mediate the attachment of the 5S RNA into the large ribosomal subunit, where it forms part of the central protuberance. In the 70S ribosome it contacts protein S13 of the 30S subunit (bridge B1b), connecting the 2 subunits; this bridge is implicated in subunit movement. Contacts the P site tRNA; the 5S rRNA and some of its associated proteins might help stabilize positioning of ribosome-bound tRNAs. In Chloroflexus aggregans (strain MD-66 / DSM 9485), this protein is Large ribosomal subunit protein uL5.